The chain runs to 343 residues: MNGAVCVLSALIAVFTCFSCRPAVQDERAVRIAVFVPGFRHDSPVYAMLCDGVERAVTQERATGRSIGLDIIEAGPNQALWREKLAHLAAEQRYRLIVSSNPALPHVLEPILRQFPLQRFLVLDAYAPQEHSLITFRYNQWEQAYLAGHLSALVSASAMRFANADKKIGLIAGQSYPVMTQTIIPAFLAGARAVDPAFEVDVRVVGNWYDAAKSADLARILFHEGVDVMMPICGGANQGVLAAARELGFYVSWFDDNGYARAPGYVVGSSVMEQERLAYEQTLRCIRGELPSAGAWTLGVKDGYVRFIEEDPLYLQTVPEPIRVRQSALLRRIQSGELTLPVR.

The N-terminal stretch at 1-19 is a signal peptide; that stretch reads MNGAVCVLSALIAVFTCFS. A lipid anchor (N-palmitoyl cysteine) is attached at Cys20. Cys20 carries S-diacylglycerol cysteine lipidation. Riboflavin contacts are provided by residues 43–46, Asp124, Gln140, Tyr176, Trp208, and Asp255; that span reads SPVY.

Belongs to the BMP lipoprotein family. Monomer in solution. The complex is probably composed of two ATP-binding proteins (RfuB), two transmembrane proteins (RfuC and RfuD) and a solute-binding protein (RfuA).

It localises to the cell inner membrane. In terms of biological role, probably part of the ABC transporter complex RfuABCD involved in riboflavin import. Binds riboflavin. The protein is ABC transporter riboflavin-binding protein RfuA of Treponema pallidum (strain Nichols).